Here is a 311-residue protein sequence, read N- to C-terminus: Methionyl-tRNA formyltransferase (311 aa).

110-113 (SLLP) provides a ligand contact to (6S)-5,6,7,8-tetrahydrofolate.

It belongs to the Fmt family.

It catalyses the reaction L-methionyl-tRNA(fMet) + (6R)-10-formyltetrahydrofolate = N-formyl-L-methionyl-tRNA(fMet) + (6S)-5,6,7,8-tetrahydrofolate + H(+). Its function is as follows. Attaches a formyl group to the free amino group of methionyl-tRNA(fMet). The formyl group appears to play a dual role in the initiator identity of N-formylmethionyl-tRNA by promoting its recognition by IF2 and preventing the misappropriation of this tRNA by the elongation apparatus. This is Methionyl-tRNA formyltransferase from Streptococcus pyogenes serotype M6 (strain ATCC BAA-946 / MGAS10394).